Consider the following 719-residue polypeptide: Phosphoribosylformylglycinamidine synthase subunit PurL (719 aa).

The active site involves histidine 47. ATP is bound by residues tyrosine 50 and lysine 89. Glutamate 91 contributes to the Mg(2+) binding site. Residues 92–95 (SHNH) and arginine 114 contribute to the substrate site. Residue histidine 93 is the Proton acceptor of the active site. Aspartate 115 contributes to the Mg(2+) binding site. Glutamine 238 contributes to the substrate binding site. Aspartate 266 contacts Mg(2+). Position 310–312 (310–312 (ESQ)) interacts with substrate. Residues aspartate 488 and glycine 525 each coordinate ATP. Asparagine 526 lines the Mg(2+) pocket. Residue serine 528 participates in substrate binding.

Belongs to the FGAMS family. Monomer. Part of the FGAM synthase complex composed of 1 PurL, 1 PurQ and 2 PurS subunits.

The protein localises to the cytoplasm. It carries out the reaction N(2)-formyl-N(1)-(5-phospho-beta-D-ribosyl)glycinamide + L-glutamine + ATP + H2O = 2-formamido-N(1)-(5-O-phospho-beta-D-ribosyl)acetamidine + L-glutamate + ADP + phosphate + H(+). It functions in the pathway purine metabolism; IMP biosynthesis via de novo pathway; 5-amino-1-(5-phospho-D-ribosyl)imidazole from N(2)-formyl-N(1)-(5-phospho-D-ribosyl)glycinamide: step 1/2. In terms of biological role, part of the phosphoribosylformylglycinamidine synthase complex involved in the purines biosynthetic pathway. Catalyzes the ATP-dependent conversion of formylglycinamide ribonucleotide (FGAR) and glutamine to yield formylglycinamidine ribonucleotide (FGAM) and glutamate. The FGAM synthase complex is composed of three subunits. PurQ produces an ammonia molecule by converting glutamine to glutamate. PurL transfers the ammonia molecule to FGAR to form FGAM in an ATP-dependent manner. PurS interacts with PurQ and PurL and is thought to assist in the transfer of the ammonia molecule from PurQ to PurL. The chain is Phosphoribosylformylglycinamidine synthase subunit PurL from Ruegeria pomeroyi (strain ATCC 700808 / DSM 15171 / DSS-3) (Silicibacter pomeroyi).